The chain runs to 272 residues: PHD finger protein ALFIN-LIKE 6 (272 aa).

A compositionally biased stretch (gly residues) spans 1–23 (MEGGGGGGGGGGGGGGGGGGGGA). 2 disordered regions span residues 1–24 (MEGG…GGAP) and 162–218 (QAKE…DNTL). Positions 168–182 (PNSSSKSNKPSSKVQ) are enriched in low complexity. Residues 183-200 (SKAESRSKSKLSAPKDEE) show a composition bias toward basic and acidic residues. Residues 201–214 (GSGDDEGEEEEDDH) show a composition bias toward acidic residues. The PHD-type zinc finger occupies 216-268 (NTLCGTCGTNDGKDEFWICCDNCEKWYHGKCVKITPARAEHIKQYKCPDCTNK).

The protein belongs to the Alfin family.

The protein localises to the nucleus. Histone-binding component that specifically recognizes H3 tails trimethylated on 'Lys-4' (H3K4me3), which mark transcription start sites of virtually all active genes. The chain is PHD finger protein ALFIN-LIKE 6 from Oryza sativa subsp. japonica (Rice).